A 94-amino-acid polypeptide reads, in one-letter code: Small ribosomal subunit protein bS20 (94 aa).

The protein belongs to the bacterial ribosomal protein bS20 family.

Functionally, binds directly to 16S ribosomal RNA. The sequence is that of Small ribosomal subunit protein bS20 from Symbiobacterium thermophilum (strain DSM 24528 / JCM 14929 / IAM 14863 / T).